A 152-amino-acid polypeptide reads, in one-letter code: Deoxyuridine 5'-triphosphate nucleotidohydrolase (152 aa).

Substrate is bound by residues 71–73 (RSG), Asn84, 88–90 (LID), and Met98.

The protein belongs to the dUTPase family. Mg(2+) serves as cofactor.

It carries out the reaction dUTP + H2O = dUMP + diphosphate + H(+). Its pathway is pyrimidine metabolism; dUMP biosynthesis; dUMP from dCTP (dUTP route): step 2/2. Functionally, this enzyme is involved in nucleotide metabolism: it produces dUMP, the immediate precursor of thymidine nucleotides and it decreases the intracellular concentration of dUTP so that uracil cannot be incorporated into DNA. The protein is Deoxyuridine 5'-triphosphate nucleotidohydrolase of Klebsiella pneumoniae subsp. pneumoniae (strain ATCC 700721 / MGH 78578).